The following is a 217-amino-acid chain: Peptide methionine sulfoxide reductase MsrA (217 aa).

Cys56 is an active-site residue.

The protein belongs to the MsrA Met sulfoxide reductase family.

It carries out the reaction L-methionyl-[protein] + [thioredoxin]-disulfide + H2O = L-methionyl-(S)-S-oxide-[protein] + [thioredoxin]-dithiol. It catalyses the reaction [thioredoxin]-disulfide + L-methionine + H2O = L-methionine (S)-S-oxide + [thioredoxin]-dithiol. Functionally, has an important function as a repair enzyme for proteins that have been inactivated by oxidation. Catalyzes the reversible oxidation-reduction of methionine sulfoxide in proteins to methionine. This is Peptide methionine sulfoxide reductase MsrA from Corynebacterium glutamicum (strain ATCC 13032 / DSM 20300 / JCM 1318 / BCRC 11384 / CCUG 27702 / LMG 3730 / NBRC 12168 / NCIMB 10025 / NRRL B-2784 / 534).